Reading from the N-terminus, the 262-residue chain is Acyl-[acyl-carrier-protein]--UDP-N-acetylglucosamine O-acyltransferase (262 aa).

It belongs to the transferase hexapeptide repeat family. LpxA subfamily. As to quaternary structure, homotrimer.

It is found in the cytoplasm. The catalysed reaction is a (3R)-hydroxyacyl-[ACP] + UDP-N-acetyl-alpha-D-glucosamine = a UDP-3-O-[(3R)-3-hydroxyacyl]-N-acetyl-alpha-D-glucosamine + holo-[ACP]. It participates in glycolipid biosynthesis; lipid IV(A) biosynthesis; lipid IV(A) from (3R)-3-hydroxytetradecanoyl-[acyl-carrier-protein] and UDP-N-acetyl-alpha-D-glucosamine: step 1/6. Its function is as follows. Involved in the biosynthesis of lipid A, a phosphorylated glycolipid that anchors the lipopolysaccharide to the outer membrane of the cell. This chain is Acyl-[acyl-carrier-protein]--UDP-N-acetylglucosamine O-acyltransferase, found in Herminiimonas arsenicoxydans.